A 288-amino-acid polypeptide reads, in one-letter code: Protoheme IX farnesyltransferase (288 aa).

9 helical membrane passes run 8-28 (IIKPGIIFGNIISTIGGFLLA), 35-55 (VNLFIFTISATAILIASASIF), 75-95 (IAIGLISSNIAYIYALILLIL), 105-125 (FLTIFISMLGFFIYVFIYSLL), 130-150 (SVYSTIIGSLSGATPPIIGYC), 161-181 (FILLCIFSFWQIPHSYAIGLV), 205-225 (INIIIYIIAFFISTIMLFFAG), 230-250 (NYLFFSIFFGLIWIFIAIKGF), and 265-285 (IFLFSIVIITAISILISIDYK).

It belongs to the UbiA prenyltransferase family. Protoheme IX farnesyltransferase subfamily.

Its subcellular location is the cell membrane. It catalyses the reaction heme b + (2E,6E)-farnesyl diphosphate + H2O = Fe(II)-heme o + diphosphate. The protein operates within porphyrin-containing compound metabolism; heme O biosynthesis; heme O from protoheme: step 1/1. In terms of biological role, converts heme B (protoheme IX) to heme O by substitution of the vinyl group on carbon 2 of heme B porphyrin ring with a hydroxyethyl farnesyl side group. The protein is Protoheme IX farnesyltransferase of Wigglesworthia glossinidia brevipalpis.